The primary structure comprises 181 residues: Ribonuclease HII (181 aa).

Positions M1 to I181 constitute an RNase H type-2 domain. D6, E7, and D98 together coordinate a divalent metal cation.

It belongs to the RNase HII family. Mn(2+) serves as cofactor. It depends on Mg(2+) as a cofactor.

The protein resides in the cytoplasm. It carries out the reaction Endonucleolytic cleavage to 5'-phosphomonoester.. Its function is as follows. Endonuclease that specifically degrades the RNA of RNA-DNA hybrids. The polypeptide is Ribonuclease HII (Borreliella burgdorferi (strain ZS7) (Borrelia burgdorferi)).